The chain runs to 876 residues: Leucine--tRNA ligase (876 aa).

Residues 42-52 carry the 'HIGH' region motif; that stretch reads PYPSGKLHMGH. A 'KMSKS' region motif is present at residues 634 to 638; the sequence is KMSKS. K637 contributes to the ATP binding site.

Belongs to the class-I aminoacyl-tRNA synthetase family.

It is found in the cytoplasm. The catalysed reaction is tRNA(Leu) + L-leucine + ATP = L-leucyl-tRNA(Leu) + AMP + diphosphate. The sequence is that of Leucine--tRNA ligase from Neisseria meningitidis serogroup B (strain ATCC BAA-335 / MC58).